Consider the following 427-residue polypeptide: 3-phosphoshikimate 1-carboxyvinyltransferase (427 aa).

Residues Lys22, Ser23, and Arg27 each contribute to the 3-phosphoshikimate site. Phosphoenolpyruvate is bound at residue Lys22. Phosphoenolpyruvate-binding residues include Gly96 and Arg124. 3-phosphoshikimate-binding residues include Ser170, Ser171, Gln172, Ser199, Asp313, Asn336, and Lys340. Residue Gln172 coordinates phosphoenolpyruvate. The Proton acceptor role is filled by Asp313. 3 residues coordinate phosphoenolpyruvate: Arg344, Arg386, and Lys411.

It belongs to the EPSP synthase family. In terms of assembly, monomer.

The protein resides in the cytoplasm. The enzyme catalyses 3-phosphoshikimate + phosphoenolpyruvate = 5-O-(1-carboxyvinyl)-3-phosphoshikimate + phosphate. The protein operates within metabolic intermediate biosynthesis; chorismate biosynthesis; chorismate from D-erythrose 4-phosphate and phosphoenolpyruvate: step 6/7. Functionally, catalyzes the transfer of the enolpyruvyl moiety of phosphoenolpyruvate (PEP) to the 5-hydroxyl of shikimate-3-phosphate (S3P) to produce enolpyruvyl shikimate-3-phosphate and inorganic phosphate. This is 3-phosphoshikimate 1-carboxyvinyltransferase from Aeromonas salmonicida.